Consider the following 250-residue polypeptide: Tripartite motif-containing protein 74 (250 aa).

The RING-type zinc-finger motif lies at 16 to 57 (CPICLEVFKESLMLQCGHSYCKGCLVSLSYHLDTKVRCPMCW). Residues 84–125 (PEPKVCVHHRNPLSLFCEKDQELICGLCGLLGSHQHHPVTPV) form a B box-type zinc finger. Residues Cys89, His92, Cys111, and His117 each contribute to the Zn(2+) site. Coiled coils occupy residues 125–169 (VSTV…NESD) and 204–235 (LVASLDMQLEQAQGTRERLAQAECVLEQFGNE).

Belongs to the TRIM/RBCC family.

The chain is Tripartite motif-containing protein 74 (TRIM74) from Homo sapiens (Human).